The sequence spans 274 residues: Ribose-5-phosphate isomerase (274 aa).

Belongs to the ribose 5-phosphate isomerase family.

The protein resides in the cytoplasm. The catalysed reaction is aldehydo-D-ribose 5-phosphate = D-ribulose 5-phosphate. It functions in the pathway carbohydrate degradation; pentose phosphate pathway; D-ribose 5-phosphate from D-ribulose 5-phosphate (non-oxidative stage): step 1/1. The protein is Ribose-5-phosphate isomerase (rki1) of Schizosaccharomyces pombe (strain 972 / ATCC 24843) (Fission yeast).